A 381-amino-acid chain; its full sequence is Teichoic acid glycerol-phosphate primase (381 aa).

It belongs to the CDP-glycerol glycerophosphotransferase family.

It localises to the cell membrane. It catalyses the reaction N-acetyl-beta-D-mannosaminyl-(1-&gt;4)-N-acetyl-alpha-D-glucosaminyl di-trans,octa-cis-undecaprenyl diphosphate + CDP-glycerol = 4-O-[(2R)-glycerylphospho]-N-acetyl-beta-D-mannosaminyl-(1-&gt;4)-N-acetyl-alpha-D-glucosaminyl di-trans,octa-cis-undecaprenyl diphosphate + CMP + H(+). It participates in cell wall biogenesis; poly(glycerol phosphate) teichoic acid biosynthesis. In terms of biological role, catalyzes the addition of a single glycerol phosphate residue to the prenoldiphosphate-linked disaccharide, as a primer for polymerisation by TagF. The chain is Teichoic acid glycerol-phosphate primase (tagB) from Bacillus subtilis (strain 168).